The sequence spans 678 residues: DNA ligase (678 aa).

NAD(+)-binding positions include 36-40 (DAEYD), 85-86 (SL), and Glu-117. Catalysis depends on Lys-119, which acts as the N6-AMP-lysine intermediate. Residues Arg-140, Glu-177, Lys-294, and Lys-318 each coordinate NAD(+). Cys-412, Cys-415, Cys-430, and Cys-436 together coordinate Zn(2+). In terms of domain architecture, BRCT spans 595 to 678 (ADEQPLNGQT…NLLREHGIEV (84 aa)).

This sequence belongs to the NAD-dependent DNA ligase family. LigA subfamily. The cofactor is Mg(2+). It depends on Mn(2+) as a cofactor.

It carries out the reaction NAD(+) + (deoxyribonucleotide)n-3'-hydroxyl + 5'-phospho-(deoxyribonucleotide)m = (deoxyribonucleotide)n+m + AMP + beta-nicotinamide D-nucleotide.. DNA ligase that catalyzes the formation of phosphodiester linkages between 5'-phosphoryl and 3'-hydroxyl groups in double-stranded DNA using NAD as a coenzyme and as the energy source for the reaction. It is essential for DNA replication and repair of damaged DNA. The sequence is that of DNA ligase from Marinobacter nauticus (strain ATCC 700491 / DSM 11845 / VT8) (Marinobacter aquaeolei).